Reading from the N-terminus, the 351-residue chain is Prostaglandin reductase 2 (351 aa).

99-100 (FY) is a substrate binding site. Residues 165–168 (GACG), lysine 192, tyrosine 208, asparagine 231, 253–259 (CGQISQY), 287–289 (FLV), and asparagine 337 contribute to the NADP(+) site. Residue 288–290 (LVL) participates in substrate binding.

Belongs to the NADP-dependent oxidoreductase L4BD family. In terms of assembly, monomer.

It localises to the cytoplasm. It catalyses the reaction 13,14-dihydro-15-oxo-prostaglandin E2 + NAD(+) = 15-oxoprostaglandin E2 + NADH + H(+). The enzyme catalyses 13,14-dihydro-15-oxo-prostaglandin E2 + NADP(+) = 15-oxoprostaglandin E2 + NADPH + H(+). It carries out the reaction 13,14-dihydro-15-oxo-PGF2alpha + NADP(+) = 15-oxoprostaglandin F2alpha + NADPH + H(+). The catalysed reaction is 13,14-dihydro-15-oxo-prostaglandin E1 + NADP(+) = 15-oxoprostaglandin E1 + NADPH + H(+). It catalyses the reaction 13,14-dihydro-15-oxo-prostaglandin F1alpha + NADP(+) = 15-oxoprostaglandin F1alpha + NADPH + H(+). Functions as 15-oxo-prostaglandin 13-reductase and acts on 15-keto-PGE1, 15-keto-PGE2, 15-keto-PGE1-alpha and 15-keto-PGE2-alpha with highest activity towards 15-keto-PGE2. Overexpression represses transcriptional activity of PPARG and inhibits adipocyte differentiation. The protein is Prostaglandin reductase 2 (PTGR2) of Bos taurus (Bovine).